A 175-amino-acid polypeptide reads, in one-letter code: ATP synthase subunit delta (175 aa).

The protein belongs to the ATPase delta chain family. In terms of assembly, F-type ATPases have 2 components, F(1) - the catalytic core - and F(0) - the membrane proton channel. F(1) has five subunits: alpha(3), beta(3), gamma(1), delta(1), epsilon(1). F(0) has three main subunits: a(1), b(2) and c(10-14). The alpha and beta chains form an alternating ring which encloses part of the gamma chain. F(1) is attached to F(0) by a central stalk formed by the gamma and epsilon chains, while a peripheral stalk is formed by the delta and b chains.

It localises to the cell inner membrane. F(1)F(0) ATP synthase produces ATP from ADP in the presence of a proton or sodium gradient. F-type ATPases consist of two structural domains, F(1) containing the extramembraneous catalytic core and F(0) containing the membrane proton channel, linked together by a central stalk and a peripheral stalk. During catalysis, ATP synthesis in the catalytic domain of F(1) is coupled via a rotary mechanism of the central stalk subunits to proton translocation. Its function is as follows. This protein is part of the stalk that links CF(0) to CF(1). It either transmits conformational changes from CF(0) to CF(1) or is implicated in proton conduction. The polypeptide is ATP synthase subunit delta (Sulfurovum sp. (strain NBC37-1)).